Here is a 226-residue protein sequence, read N- to C-terminus: Probable endolytic peptidoglycan transglycosylase RlpA (226 aa).

Positions 1–26 are cleaved as a signal peptide; the sequence is MERFLGFRTPLGALGVVILLTLILSS. A lipid anchor (N-palmitoyl cysteine) is attached at C27. C27 carries the S-diacylglycerol cysteine lipid modification.

It belongs to the RlpA family.

It localises to the cell membrane. Lytic transglycosylase with a strong preference for naked glycan strands that lack stem peptides. In Aquifex aeolicus (strain VF5), this protein is Probable endolytic peptidoglycan transglycosylase RlpA.